The following is a 60-amino-acid chain: UPF0434 protein Dtpsy_1553 (60 aa).

It belongs to the UPF0434 family.

This Acidovorax ebreus (strain TPSY) (Diaphorobacter sp. (strain TPSY)) protein is UPF0434 protein Dtpsy_1553.